A 156-amino-acid polypeptide reads, in one-letter code: Myosin regulatory light chain B, smooth adductor muscle (156 aa).

Residue Ala1 is modified to Blocked amino end (Ala). EF-hand domains are found at residues 15-50 (KQIQEMKEAFTMIDQNRDGFIDINDLKEMFSSLGRT) and 84-119 (DTEETLRNAFAMFDELDTKKLNIEYIKDLLENMGDN). Ca(2+) is bound by residues Asp28, Asn30, Asp32, and Asp39.

In terms of biological role, in molluscan muscle, calcium regulation is associated with myosin rather than with actin. Muscle myosin contains two types of light chains: the catalytic light chain, essential for ATPase activity, and the regulatory light chain, a calcium-binding protein responsible for Ca(2+) dependent binding and Ca(2+) dependent Mg-ATPase activity. The protein is Myosin regulatory light chain B, smooth adductor muscle of Mizuhopecten yessoensis (Japanese scallop).